A 451-amino-acid polypeptide reads, in one-letter code: Lysine histidine transporter-like 3 (451 aa).

At 1–40 (MKGIPSSSNQILNQDLVEDQSFELEDWLPITASRNANWYY) the chain is on the cytoplasmic side. A helical membrane pass occupies residues 41 to 61 (SAFHNVTAIVGAGVLGLPYAM). Topologically, residues 62–63 (SE) are extracellular. The chain crosses the membrane as a helical span at residues 64–84 (LGWGPGVVVLILSWVITLYTF). Topologically, residues 85-115 (WQMIEMHEMFEGKRFDRYHELGQAAFGKKLG) are cytoplasmic. A helical transmembrane segment spans residues 116-136 (LYIVVPLQLLVETSACIVYMV). The Extracellular portion of the chain corresponds to 137 to 159 (TGGESLKKIHQLSVGDYECRKLK). A helical transmembrane segment spans residues 160 to 177 (VRHFILIFASSQFVLSLL). The Cytoplasmic portion of the chain corresponds to 178-182 (KNFNS). The helical transmembrane segment at 183–203 (ISGVSLVAAVMSMSYSTIAWV) threads the bilayer. Residues 204-227 (ASLTKGVANNVEYGYKRRNNTSVP) lie on the Extracellular side of the membrane. The helical transmembrane segment at 228 to 248 (LAFLGALGEMAFAYAGHNVVL) threads the bilayer. Over 249–269 (EIQATIPSTPENPSKRPMWKG) the chain is Cytoplasmic. Residues 270–290 (AIVAYIIVAFCYFPVALVGFW) traverse the membrane as a helical segment. Residues 291–309 (TFGNNVEENILKTLRGPKG) lie on the Extracellular side of the membrane. Residues 310-330 (LIIVANIFVIIHLMGSYQVYA) traverse the membrane as a helical segment. Residues 331 to 358 (MPVFDMIESVMIKKWHFSPTRVLRFTIR) are Cytoplasmic-facing. The helical transmembrane segment at 359–379 (WTFVAATMGIAVALPHFSALL) threads the bilayer. A topological domain (extracellular) is located at residue Ser380. A helical membrane pass occupies residues 381-401 (FFGGFIFAPTTYFIPCIIWLI). Residues 402–413 (LKKPKRFSLSWC) lie on the Cytoplasmic side of the membrane. The chain crosses the membrane as a helical span at residues 414-434 (INWICIILGVLVMIIAPIGGL). Residues 435–451 (AKLMNALKQPDSSCKST) are Extracellular-facing.

The protein belongs to the amino acid/polyamine transporter 2 family. Amino acid/auxin permease (AAAP) (TC 2.A.18.2) subfamily.

Its subcellular location is the cell membrane. Amino acid transporter. The chain is Lysine histidine transporter-like 3 from Arabidopsis thaliana (Mouse-ear cress).